Reading from the N-terminus, the 127-residue chain is MAIWQGRSLKKPSGGRIVLARKKRKRELGREPSNTRVAEQDKRKIIRTYGGNRKVRLTAAAYANVFDKSGKGRKVRIIRVLENPANRQFARRNIITKGAIIETEIGKAKVTSRPGQDGVVNAILLEE.

It belongs to the eukaryotic ribosomal protein eS8 family. As to quaternary structure, part of the 30S ribosomal subunit.

The chain is Small ribosomal subunit protein eS8 (rps8e) from Pyrococcus horikoshii (strain ATCC 700860 / DSM 12428 / JCM 9974 / NBRC 100139 / OT-3).